The chain runs to 286 residues: Bifunctional protein FolD (286 aa).

NADP(+) is bound by residues 165 to 167, Ser190, and Val231; that span reads GRS.

Belongs to the tetrahydrofolate dehydrogenase/cyclohydrolase family. Homodimer.

The catalysed reaction is (6R)-5,10-methylene-5,6,7,8-tetrahydrofolate + NADP(+) = (6R)-5,10-methenyltetrahydrofolate + NADPH. The enzyme catalyses (6R)-5,10-methenyltetrahydrofolate + H2O = (6R)-10-formyltetrahydrofolate + H(+). Its pathway is one-carbon metabolism; tetrahydrofolate interconversion. Catalyzes the oxidation of 5,10-methylenetetrahydrofolate to 5,10-methenyltetrahydrofolate and then the hydrolysis of 5,10-methenyltetrahydrofolate to 10-formyltetrahydrofolate. This is Bifunctional protein FolD from Bacillus cereus (strain ATCC 14579 / DSM 31 / CCUG 7414 / JCM 2152 / NBRC 15305 / NCIMB 9373 / NCTC 2599 / NRRL B-3711).